We begin with the raw amino-acid sequence, 418 residues long: Lariat debranching enzyme (418 aa).

Positions 8, 10, 39, and 84 each coordinate a divalent metal cation. The tract at residues 124–154 (SGIYNERHYRSGHFERPPYNESTIRSVYHVR) is lariat recognition loop. Residues histidine 174, histidine 226, and histidine 228 each coordinate a divalent metal cation. Residues 372-418 (GERTDIPASLAPSDLPTYDSEEIPIDDIDEIEEMEEAKADDHTRDDA) are disordered. Positions 390–406 (DSEEIPIDDIDEIEEME) are enriched in acidic residues. The span at 407–418 (EAKADDHTRDDA) shows a compositional bias: basic and acidic residues.

It belongs to the lariat debranching enzyme family. Fe(2+) is required as a cofactor. It depends on Zn(2+) as a cofactor. The cofactor is Mn(2+). As to expression, widely expressed. Expressed in roots, stems, cauline and rosette leaves, flower buds and siliques.

Its subcellular location is the nucleus. Active in presence of diverse metals including Fe(2+), Zn(2+), Mn(2+). Binds two metal cations in two adjacent alpha and beta metal-binding pockets. Its function is as follows. Cleaves the 2'-5' phosphodiester linkage at the branch point of lariat intron pre-mRNAs after splicing and converts them into linear molecules that are subsequently degraded. It thereby facilitates ribonucleotide turnover. It may also participate in retrovirus replication via an RNA lariat intermediate in cDNA synthesis. Plays en essential role during embryogenesis. This chain is Lariat debranching enzyme (DBR1), found in Arabidopsis thaliana (Mouse-ear cress).